Here is a 311-residue protein sequence, read N- to C-terminus: Probable cell division protein WhiA (311 aa).

Positions 277-311 (TLKEVADQIPDGPISKSGVNHRFKKLHEIAESLRE) form a DNA-binding region, H-T-H motif.

The protein belongs to the WhiA family.

Functionally, involved in cell division and chromosome segregation. The polypeptide is Probable cell division protein WhiA (Lactobacillus acidophilus (strain ATCC 700396 / NCK56 / N2 / NCFM)).